A 608-amino-acid polypeptide reads, in one-letter code: Threonine--tRNA ligase (608 aa).

The editing domain stretch occupies residues 1–145 (MKTLLIHAKH…TIKPGRRVRP (145 aa)). Catalytic stretches follow at residues 192 to 489 (PKYL…PSLP) and 193 to 489 (KYLE…PSLP). Residues cysteine 286, histidine 337, and histidine 458 each coordinate Zn(2+).

This sequence belongs to the class-II aminoacyl-tRNA synthetase family. As to quaternary structure, homodimer. Zn(2+) is required as a cofactor.

The protein resides in the cytoplasm. It carries out the reaction tRNA(Thr) + L-threonine + ATP = L-threonyl-tRNA(Thr) + AMP + diphosphate + H(+). Its function is as follows. Catalyzes the attachment of threonine to tRNA(Thr) in a two-step reaction: L-threonine is first activated by ATP to form Thr-AMP and then transferred to the acceptor end of tRNA(Thr). Also edits incorrectly charged L-seryl-tRNA(Thr). The polypeptide is Threonine--tRNA ligase (Thermofilum pendens (strain DSM 2475 / Hrk 5)).